We begin with the raw amino-acid sequence, 211 residues long: Large ribosomal subunit protein mL48 (211 aa).

The transit peptide at 1–27 (MSGTLGKVLGVWTNTVSKQGFSLLRFR) directs the protein to the mitochondrion. The residue at position 198 (Lys198) is an N6-succinyllysine.

It belongs to the mitochondrion-specific ribosomal protein mL48 family. As to quaternary structure, component of the mitochondrial ribosome large subunit (39S) which comprises a 16S rRNA and about 50 distinct proteins. Interacts with OXA1L.

It is found in the mitochondrion. The sequence is that of Large ribosomal subunit protein mL48 (Mrpl48) from Mus musculus (Mouse).